The sequence spans 137 residues: Ribosome-binding factor A (137 aa).

This sequence belongs to the RbfA family. As to quaternary structure, monomer. Binds 30S ribosomal subunits, but not 50S ribosomal subunits or 70S ribosomes.

The protein resides in the cytoplasm. Its function is as follows. One of several proteins that assist in the late maturation steps of the functional core of the 30S ribosomal subunit. Associates with free 30S ribosomal subunits (but not with 30S subunits that are part of 70S ribosomes or polysomes). Required for efficient processing of 16S rRNA. May interact with the 5'-terminal helix region of 16S rRNA. The protein is Ribosome-binding factor A of Nitrobacter hamburgensis (strain DSM 10229 / NCIMB 13809 / X14).